A 391-amino-acid polypeptide reads, in one-letter code: UPF0229 protein BAA_0633 (391 aa).

Residues 1 to 16 (MGEENQPNYTISQENW) are compositionally biased toward polar residues. 2 disordered regions span residues 1-31 (MGEE…RHQE) and 80-117 (HVGQ…GDAA). A compositionally biased stretch (basic and acidic residues) spans 21–31 (KGYDDQQRHQE). The span at 98–115 (GSGGQKQKGPGKGQGAGD) shows a compositional bias: gly residues.

The protein belongs to the UPF0229 family.

This is UPF0229 protein BAA_0633 from Bacillus anthracis (strain A0248).